Consider the following 610-residue polypeptide: UvrABC system protein C (610 aa).

The 79-residue stretch at 16–94 folds into the GIY-YIG domain; sequence SQPGVYRMYD…IKLYQPRYNV (79 aa). The 36-residue stretch at 204-239 folds into the UVR domain; the sequence is DQVINQLVSRMEQASQNLAFEEAARLRDQIQAVRRV.

It belongs to the UvrC family. Interacts with UvrB in an incision complex.

The protein resides in the cytoplasm. Functionally, the UvrABC repair system catalyzes the recognition and processing of DNA lesions. UvrC both incises the 5' and 3' sides of the lesion. The N-terminal half is responsible for the 3' incision and the C-terminal half is responsible for the 5' incision. The chain is UvrABC system protein C from Cronobacter sakazakii (strain ATCC BAA-894) (Enterobacter sakazakii).